A 511-amino-acid chain; its full sequence is Rab proteins geranylgeranyltransferase component A (511 aa).

It belongs to the Rab GDI family.

The protein localises to the cytoplasm. It localises to the perinuclear region. Its subcellular location is the cytoskeleton. The protein resides in the spindle pole. Binds unprenylated Rab proteins, presents it to the catalytic component B, and remains bound to it after the geranylgeranyl transfer reaction. The component A is thought to be regenerated by transferring its prenylated Rab to a protein acceptor. This Drosophila melanogaster (Fruit fly) protein is Rab proteins geranylgeranyltransferase component A.